The sequence spans 132 residues: Large ribosomal subunit protein uL22 (132 aa).

It belongs to the universal ribosomal protein uL22 family. Part of the 50S ribosomal subunit.

Functionally, this protein binds specifically to 23S rRNA; its binding is stimulated by other ribosomal proteins, e.g. L4, L17, and L20. It is important during the early stages of 50S assembly. It makes multiple contacts with different domains of the 23S rRNA in the assembled 50S subunit and ribosome. The globular domain of the protein is located near the polypeptide exit tunnel on the outside of the subunit, while an extended beta-hairpin is found that lines the wall of the exit tunnel in the center of the 70S ribosome. This Pelagibacter ubique (strain HTCC1062) protein is Large ribosomal subunit protein uL22.